The following is a 361-amino-acid chain: Glyceraldehyde-3-phosphate dehydrogenase, glycosomal (361 aa).

NAD(+) contacts are provided by residues 13-14 (RI), aspartate 39, and arginine 93. D-glyceraldehyde 3-phosphate is bound by residues 166 to 168 (SCT), threonine 198, 227 to 228 (TG), and arginine 250. Cysteine 167 acts as the Nucleophile in catalysis. An NAD(+)-binding site is contributed by asparagine 336. The short motif at 359–361 (SKL) is the Microbody targeting signal element.

This sequence belongs to the glyceraldehyde-3-phosphate dehydrogenase family. Homotetramer.

It localises to the glycosome. It carries out the reaction D-glyceraldehyde 3-phosphate + phosphate + NAD(+) = (2R)-3-phospho-glyceroyl phosphate + NADH + H(+). Its pathway is carbohydrate degradation; glycolysis; pyruvate from D-glyceraldehyde 3-phosphate: step 1/5. The polypeptide is Glyceraldehyde-3-phosphate dehydrogenase, glycosomal (GAPDG) (Crithidia fasciculata).